We begin with the raw amino-acid sequence, 730 residues long: Propionyl-CoA carboxylase alpha chain, mitochondrial (730 aa).

A mitochondrion-targeting transit peptide spans 1–52 (MAGLWVGGSVLVAAGRRGSRSPRPLMRSVALWTLKHVPQYSRQRLLVSRSLC). One can recognise a Biotin carboxylation domain in the interval 62–509 (TFDKILIANR…NTKFLSDVYP (448 aa)). N6-acetyllysine; alternate is present on Lys65. At Lys65 the chain carries N6-succinyllysine; alternate. Residue Lys119 is modified to N6-succinyllysine. Lys150 is modified (N6-acetyllysine; alternate). Position 150 is an N6-succinyllysine; alternate (Lys150). Lys154 is subject to N6-acetyllysine. ATP is bound at residue Lys177. Residues 181 to 378 (KLLAKKAKVN…LVQEMIRVAK (198 aa)) enclose the ATP-grasp domain. Position 188 is an N6-succinyllysine (Lys188). At Lys200 the chain carries N6-acetyllysine; alternate. The residue at position 200 (Lys200) is an N6-succinyllysine; alternate. ATP is bound by residues 209 to 270 (AREI…PRHI), Glu261, and Asn296. The residue at position 252 (Ser252) is a Phosphoserine. The residue at position 262 (Lys262) is an N6-succinyllysine. Residues Glu336, Glu349, and Asn351 each contribute to the Mg(2+) site. The Mn(2+) site is built by Glu336, Glu349, and Asn351. Residue Glu349 is part of the active site. Lys407 carries the post-translational modification N6-succinyllysine. Residue Phe409 coordinates biotin. 3 positions are modified to N6-succinyllysine: Lys502, Lys513, and Lys650. The 76-residue stretch at 655–730 (KAAEDTSSIL…GEGDLLVELE (76 aa)) folds into the Biotinyl-binding domain. Lys696 is modified (N6-biotinyllysine).

The holoenzyme is a dodecamer composed of 6 PCCA/alpha subunits and 6 PCCB/beta subunits. Interacts (via the biotin carboxylation domain) with SIRT4. Interacts with SIRT3 and SIRT5. Mg(2+) is required as a cofactor. Requires Mn(2+) as cofactor. Biotin serves as cofactor. Post-translationally, acetylated. The biotin cofactor is covalently attached to the C-terminal biotinyl-binding domain and is required for the catalytic activity. Biotinylation is catalyzed by HLCS.

It is found in the mitochondrion matrix. The enzyme catalyses propanoyl-CoA + hydrogencarbonate + ATP = (S)-methylmalonyl-CoA + ADP + phosphate + H(+). It catalyses the reaction butanoyl-CoA + hydrogencarbonate + ATP = (2S)-ethylmalonyl-CoA + ADP + phosphate + H(+). The protein operates within metabolic intermediate metabolism; propanoyl-CoA degradation; succinyl-CoA from propanoyl-CoA: step 1/3. Its function is as follows. This is one of the 2 subunits of the biotin-dependent propionyl-CoA carboxylase (PCC), a mitochondrial enzyme involved in the catabolism of odd chain fatty acids, branched-chain amino acids isoleucine, threonine, methionine, and valine and other metabolites. Propionyl-CoA carboxylase catalyzes the carboxylation of propionyl-CoA/propanoyl-CoA to D-methylmalonyl-CoA/(S)-methylmalonyl-CoA. Within the holoenzyme, the alpha subunit catalyzes the ATP-dependent carboxylation of the biotin carried by the biotin carboxyl carrier (BCC) domain, while the beta subunit then tranfers the carboxyl group from carboxylated biotin to propionyl-CoA. Propionyl-CoA carboxylase also significantly acts on butyryl-CoA/butanoyl-CoA, which is converted to ethylmalonyl-CoA/(2S)-ethylmalonyl-CoA at a much lower rate. Other alternative minor substrates include (2E)-butenoyl-CoA/crotonoyl-CoA. In Sus scrofa (Pig), this protein is Propionyl-CoA carboxylase alpha chain, mitochondrial.